Consider the following 343-residue polypeptide: Selenide, water dikinase (343 aa).

Sec-16 is a catalytic residue. Position 16 (Sec-16) is a non-standard amino acid, selenocysteine. ATP contacts are provided by residues Lys-19 and 46-48 (GAE). Asp-49 is a binding site for Mg(2+). ATP-binding positions include Asp-66, Asp-89, and 137–139 (GHT). Asp-89 contacts Mg(2+). Asp-225 contributes to the Mg(2+) binding site.

The protein belongs to the selenophosphate synthase 1 family. Class I subfamily. Homodimer. Mg(2+) is required as a cofactor.

The catalysed reaction is hydrogenselenide + ATP + H2O = selenophosphate + AMP + phosphate + 2 H(+). In terms of biological role, synthesizes selenophosphate from selenide and ATP. The protein is Selenide, water dikinase of Citrifermentans bemidjiense (strain ATCC BAA-1014 / DSM 16622 / JCM 12645 / Bem) (Geobacter bemidjiensis).